The sequence spans 238 residues: Cysteine-rich venom protein pseudecin (238 aa).

Residues 1-19 form the signal peptide; that stretch reads MIAFIVLLSLAAVLQQSSG. The propeptide occupies 20-28; that stretch reads TVDFASESS. Residues 38 to 164 form the SCP domain; sequence VDKHNALRRS…SSKYLYVCQY (127 aa). Residues T51 and S106 each coordinate Zn(2+). 8 disulfide bridges follow: C75/C153, C92/C165, C148/C162, C184/C191, C187/C196, C200/C233, C209/C227, and C218/C231. Positions 200–233 constitute a ShKT domain; that stretch reads CNYNNDFSNCKSLAKKSKCQTEWIKKKCPASCFC.

As to expression, expressed by the venom gland.

Its subcellular location is the secreted. Blocks olfactory (CNGA2) and retinal (CNGA1) CNG channel currents. Is really less potent that Pseudechetoxin. Does not affect neither depolarization- nor caffeine-induced contraction of smooth muscle. The sequence is that of Cysteine-rich venom protein pseudecin from Pseudechis porphyriacus (Red-bellied black snake).